The sequence spans 442 residues: C4-dicarboxylate transport protein (442 aa).

The next 8 membrane-spanning stretches (helical) occupy residues 10-30 (VQVLIAIALGILTGFLFPSLG), 40-60 (FIKLIKMIIAPIIFATVVSGI), 77-97 (LLYFELVTTFALVIGLVIVNI), 144-164 (FTQGDLLQVLLVAVLFGFALL), 183-203 (VIFVILGFVMRLAPIGAFGAM), 221-241 (LMITFYATCALFIFGVLGLIA), 331-351 (LLGVLLLTSKGAAGVTGSGFI), and 354-374 (AATLSAVGDVPVAGLALILGI). The tract at residues 418–442 (LPTIEPDVHSEERGEGRELDSLRPA) is disordered. Residues 423 to 442 (PDVHSEERGEGRELDSLRPA) show a composition bias toward basic and acidic residues.

This sequence belongs to the dicarboxylate/amino acid:cation symporter (DAACS) (TC 2.A.23) family.

Its subcellular location is the cell membrane. Functionally, responsible for the transport of dicarboxylates such as succinate, fumarate, and malate across the membrane. This is C4-dicarboxylate transport protein from Deinococcus deserti (strain DSM 17065 / CIP 109153 / LMG 22923 / VCD115).